We begin with the raw amino-acid sequence, 210 residues long: Cell division protein SepF (210 aa).

Composition is skewed to low complexity over residues Gln-36–Gln-47 and Arg-59–Ser-69. Disordered regions lie at residues Gln-36–Ser-69 and Asn-182–Gln-210.

It belongs to the SepF family. In terms of assembly, homodimer. Interacts with FtsZ.

The protein localises to the cytoplasm. Functionally, cell division protein that is part of the divisome complex and is recruited early to the Z-ring. Probably stimulates Z-ring formation, perhaps through the cross-linking of FtsZ protofilaments. Its function overlaps with FtsA. The protein is Cell division protein SepF of Trichodesmium erythraeum (strain IMS101).